The sequence spans 288 residues: 4-hydroxybenzoate octaprenyltransferase (288 aa).

The next 6 helical transmembrane spans lie at 20-40 (IGTLLLLWPCLMALTFAAGGL), 43-63 (LKVFIIFVIGVFSMRACGCII), 96-116 (LFVVMALFSFGLVLMLNPLVV), 210-230 (QIIGLFQLAALSCFIIAGMVA), 234-254 (AIYAVGILAFIGFGLYQQKLI), and 262-282 (CFTAFLNNNWAGMVLFTALML).

The protein belongs to the UbiA prenyltransferase family. Mg(2+) is required as a cofactor.

Its subcellular location is the cell inner membrane. The catalysed reaction is all-trans-octaprenyl diphosphate + 4-hydroxybenzoate = 4-hydroxy-3-(all-trans-octaprenyl)benzoate + diphosphate. The protein operates within cofactor biosynthesis; ubiquinone biosynthesis. Its function is as follows. Catalyzes the prenylation of para-hydroxybenzoate (PHB) with an all-trans polyprenyl group. Mediates the second step in the final reaction sequence of ubiquinone-8 (UQ-8) biosynthesis, which is the condensation of the polyisoprenoid side chain with PHB, generating the first membrane-bound Q intermediate 3-octaprenyl-4-hydroxybenzoate. The chain is 4-hydroxybenzoate octaprenyltransferase from Shewanella pealeana (strain ATCC 700345 / ANG-SQ1).